The chain runs to 327 residues: Zinc transport protein ZntB (327 aa).

Residues 1–273 lie on the Cytoplasmic side of the membrane; sequence MEAIKGSEVN…ARRTYTMSLM (273 aa). A helical membrane pass occupies residues 274–294; the sequence is AMVFLPSTFLTGLFGVNLGGI. Topologically, residues 295–300 are periplasmic; that stretch reads PGGAWH. The helical transmembrane segment at 301–321 threads the bilayer; the sequence is FGFSMFCILLVVLIGGVTLWL. Residues 322 to 327 lie on the Cytoplasmic side of the membrane; the sequence is HRSKWL.

The protein belongs to the CorA metal ion transporter (MIT) (TC 1.A.35) family.

It localises to the cell inner membrane. The enzyme catalyses Zn(2+)(out) + H(+)(out) = Zn(2+)(in) + H(+)(in). Its function is as follows. Zinc transporter. Acts as a Zn(2+):proton symporter, which likely mediates zinc ion uptake. The protein is Zinc transport protein ZntB of Citrobacter koseri (strain ATCC BAA-895 / CDC 4225-83 / SGSC4696).